We begin with the raw amino-acid sequence, 242 residues long: Aspartate/glutamate leucyltransferase (242 aa).

The protein belongs to the R-transferase family. Bpt subfamily.

It is found in the cytoplasm. The catalysed reaction is N-terminal L-glutamyl-[protein] + L-leucyl-tRNA(Leu) = N-terminal L-leucyl-L-glutamyl-[protein] + tRNA(Leu) + H(+). It catalyses the reaction N-terminal L-aspartyl-[protein] + L-leucyl-tRNA(Leu) = N-terminal L-leucyl-L-aspartyl-[protein] + tRNA(Leu) + H(+). Functions in the N-end rule pathway of protein degradation where it conjugates Leu from its aminoacyl-tRNA to the N-termini of proteins containing an N-terminal aspartate or glutamate. The protein is Aspartate/glutamate leucyltransferase of Chromobacterium violaceum (strain ATCC 12472 / DSM 30191 / JCM 1249 / CCUG 213 / NBRC 12614 / NCIMB 9131 / NCTC 9757 / MK).